The following is a 102-amino-acid chain: Small ribosomal subunit protein uS10 (102 aa).

It belongs to the universal ribosomal protein uS10 family. Part of the 30S ribosomal subunit.

In terms of biological role, involved in the binding of tRNA to the ribosomes. The protein is Small ribosomal subunit protein uS10 of Heliobacterium modesticaldum (strain ATCC 51547 / Ice1).